Reading from the N-terminus, the 233-residue chain is uncharacterized protein (233 aa).

Helical transmembrane passes span 7 to 27 (VPIF…LLAY), 36 to 56 (YEFE…ILIP), 62 to 82 (MFVL…KYLA), 119 to 139 (LIIA…AILM), 159 to 179 (PLYP…VGLV), and 188 to 208 (ILLA…APHI).

It localises to the cell membrane. This is an uncharacterized protein from Methanocaldococcus jannaschii (strain ATCC 43067 / DSM 2661 / JAL-1 / JCM 10045 / NBRC 100440) (Methanococcus jannaschii).